A 340-amino-acid polypeptide reads, in one-letter code: DNA-directed RNA polymerase subunit alpha (340 aa).

An alpha N-terminal domain (alpha-NTD) region spans residues M1–E233. Positions A268 to H340 are alpha C-terminal domain (alpha-CTD).

This sequence belongs to the RNA polymerase alpha chain family. In terms of assembly, in plastids the minimal PEP RNA polymerase catalytic core is composed of four subunits: alpha, beta, beta', and beta''. When a (nuclear-encoded) sigma factor is associated with the core the holoenzyme is formed, which can initiate transcription.

The protein localises to the plastid. It localises to the chloroplast. The enzyme catalyses RNA(n) + a ribonucleoside 5'-triphosphate = RNA(n+1) + diphosphate. Its function is as follows. DNA-dependent RNA polymerase catalyzes the transcription of DNA into RNA using the four ribonucleoside triphosphates as substrates. This Cycas taitungensis (Prince sago) protein is DNA-directed RNA polymerase subunit alpha.